Here is a 290-residue protein sequence, read N- to C-terminus: Tubulin polyglutamylase complex subunit 1 (290 aa).

The segment at 1-30 (MAAVEKRRQAVPPPAGFTDSGRQSVSRAAG) is disordered. 2 positions are modified to phosphoserine: Ser-34 and Ser-266.

As to quaternary structure, part of the neuronal tubulin polyglutamylase complex which contains TPGS1, TPGS2, TTLL1, LRRC49 and NICN1. Interacts with PCM1, CSTPP1 and LRRC49.

The protein localises to the cytoplasm. The protein resides in the cytoskeleton. Its subcellular location is the cilium axoneme. It localises to the flagellum axoneme. It is found in the cilium basal body. The protein localises to the flagellum basal body. The protein resides in the cell projection. Its subcellular location is the axon. It localises to the dendrite. It is found in the microtubule organizing center. The protein localises to the centrosome. The protein resides in the centriolar satellite. Functionally, subunit of the tubulin polyglutamylase complex (TPGC). The complex mediates cilia and flagella polyglutamylation which is essential for their biogenesis and motility. May act in the targeting of the tubulin polyglutamylase complex. Required for the development of the spermatid flagellum. In Homo sapiens (Human), this protein is Tubulin polyglutamylase complex subunit 1.